The primary structure comprises 181 residues: Oligoribonuclease (181 aa).

In terms of domain architecture, Exonuclease spans 8–171; sequence LIWIDLEMTG…QDIQESIAEL (164 aa). Tyr129 is an active-site residue.

The protein belongs to the oligoribonuclease family.

The protein localises to the cytoplasm. In terms of biological role, 3'-to-5' exoribonuclease specific for small oligoribonucleotides. The polypeptide is Oligoribonuclease (Shewanella oneidensis (strain ATCC 700550 / JCM 31522 / CIP 106686 / LMG 19005 / NCIMB 14063 / MR-1)).